Consider the following 307-residue polypeptide: Mitochondrial brown fat uncoupling protein 1 (307 aa).

Residues 1–10 (MVSLTTSEVH) are Mitochondrial intermembrane-facing. The helical transmembrane segment at 11–32 (PTMGVKTFSAGISACLADIITF) threads the bilayer. Solcar repeat units lie at residues 11–102 (PTMG…VQEY), 111–201 (PTLG…MKGA), and 210–295 (DDVP…LKKE). Residues 33 to 73 (PLDTAKVRLQIQGEGQTSSTIRYKGVLGTITTLAKTEGWPK) lie on the Mitochondrial matrix side of the membrane. Residue lysine 56 coordinates fatty acid 16:0. A helical transmembrane segment spans residues 74–96 (LYSGLPAGIQRQISFASLRIGLY). At 97 to 116 (DTVQEYFSSGKETPPTLGNR) the chain is on the mitochondrial intermembrane side. Residues 117–133 (ISAGLMTGGVAVFIGQP) form a helical membrane-spanning segment. Residues 134–178 (TEVVKVRLQAQSHLHGIKPRYTGTYNAYRIIATTESFSTLWKGTT) are Mitochondrial matrix-facing. Residues 179 to 195 (PNLMRNVIINRTELVTY) traverse the membrane as a helical segment. Residues 196–212 (DLMKGALVNNQILADDV) are Mitochondrial intermembrane-facing. Residues 213 to 232 (PCHLLSALVAGFCTTFLASP) traverse the membrane as a helical segment. The Mitochondrial matrix portion of the chain corresponds to 233-266 (ADVVKTRFINSLPGQYPSVPSCAMTMLTKEGPTA). Cysteine 254 carries the post-translational modification Cysteine sulfenic acid (-SOH). Residues 267 to 289 (FFKGFVPSFLRLASWNVIMFVCF) form a helical membrane-spanning segment. A fatty acid 16:0-binding site is contributed by lysine 269. The Mitochondrial intermembrane portion of the chain corresponds to 290-307 (EQLKKELMKSRQTMDCTT).

The protein belongs to the mitochondrial carrier (TC 2.A.29) family. Most probably functions as a monomer. Binds one purine nucleotide per monomer. However, has also been suggested to function as a homodimer or a homotetramer. Tightly associates with cardiolipin in the mitochondrion inner membrane; may stabilize and regulate its activity. May undergo sulfenylation upon cold exposure. May increase the sensitivity of UCP1 thermogenic function to the activation by noradrenaline probably through structural effects. Post-translationally, may undergo ubiquitin-mediated proteasomal degradation.

The protein resides in the mitochondrion inner membrane. The catalysed reaction is H(+)(in) = H(+)(out). With respect to regulation, has no constitutive proton transporter activity and has to be activated by long-chain fatty acids/LCFAs. Inhibited by purine nucleotides. Both purine nucleotides and LCFAs bind the cytosolic side of the transporter and directly compete to activate or inhibit it. Activated by noradrenaline and reactive oxygen species. Despite lacking canonical translational encoding for selenocysteine, a small pool of the protein has been observed to selectively incorporate selenocysteine at 'Cys-254'. Selenocysteine-modified protein is highly sensitive to redox modification and may constitute a pool of protein highly sensitive to activation by elevated levels of reactive oxygen species (ROS). Functionally, mitochondrial protein responsible for thermogenic respiration, a specialized capacity of brown adipose tissue and beige fat that participates in non-shivering adaptive thermogenesis to temperature and diet variations and more generally to the regulation of energy balance. Functions as a long-chain fatty acid/LCFA and proton symporter, simultaneously transporting one LCFA and one proton through the inner mitochondrial membrane. However, LCFAs remaining associated with the transporter via their hydrophobic tails, it results in an apparent transport of protons activated by LCFAs. Thereby, dissipates the mitochondrial proton gradient and converts the energy of substrate oxydation into heat instead of ATP. Regulates the production of reactive oxygen species/ROS by mitochondria. The sequence is that of Mitochondrial brown fat uncoupling protein 1 from Dicrostonyx groenlandicus (Northern collared lemming).